A 58-amino-acid polypeptide reads, in one-letter code: Small ribosomal subunit protein bS21 (58 aa).

A disordered region spans residues 37–58 (FYDKPSVKKRAKSKAAAKYRGR). The segment covering 43-58 (VKKRAKSKAAAKYRGR) has biased composition (basic residues).

This sequence belongs to the bacterial ribosomal protein bS21 family.

The chain is Small ribosomal subunit protein bS21 (rpsU) from Chlamydia muridarum (strain MoPn / Nigg).